A 238-amino-acid polypeptide reads, in one-letter code: Probable transcriptional regulatory protein SSP2054 (238 aa).

Belongs to the TACO1 family. YeeN subfamily.

It localises to the cytoplasm. The polypeptide is Probable transcriptional regulatory protein SSP2054 (Staphylococcus saprophyticus subsp. saprophyticus (strain ATCC 15305 / DSM 20229 / NCIMB 8711 / NCTC 7292 / S-41)).